Here is an 827-residue protein sequence, read N- to C-terminus: Ribosome biogenesis protein ERB1 (827 aa).

The tract at residues 1 to 129 (MVHSKKDKSV…DFSDDNDTRP (129 aa)) is disordered. A compositionally biased stretch (basic and acidic residues) spans 7–18 (DKSVMKHSDIKK). Residues 45–60 (CDSDDDEEFQSAEEEV) show a composition bias toward acidic residues. A compositionally biased stretch (low complexity) spans 61 to 77 (LSSGSESSSKEGSTPGS). Composition is skewed to acidic residues over residues 81–99 (GSDEEAEDEDADEEEDEDA) and 108–124 (EEGDSEGEYGSEDFSDD). The interval 291-409 (RFVPSKHEAK…LRKVPGYGES (119 aa)) is required for interaction with NOP7. The required for interaction with YTM1 stretch occupies residues 409–445 (SVRERFERSLDLYLAPRVRKNKLNIDPESLIPELPSP). 6 WD repeats span residues 461–500 (GHKGKIRTLSIDPSGLWLATGSDDGTVRVWEILTGREVYK), 509–549 (NQDD…FEVE), 657–695 (KSKGIIMDAKFHPFKPQLFVCSQRYIRIYDLSQQVLVKK), 698–737 (PGARWLSTIDIHPRGDNLIASSFDKRVLWHDLDLAATPYK), 741–780 (YHEKAVRSVGFHKKLPLFCSAADDGTIHVFHGTVYDDMMK), and 796–827 (VNSLGVLDTVWHPREAWLFSAGADNTARLWTT).

It belongs to the WD repeat BOP1/ERB1 family. Component of the NOP7 complex, composed of ERB1, NOP7 and YTM1. The complex is held together by ERB1, which interacts with NOP7 via its N-terminal domain and with YTM1 via a high-affinity interaction between the seven-bladed beta-propeller domains of the 2 proteins. The NOP7 complex associates with the 66S pre-ribosome.

It is found in the nucleus. The protein resides in the nucleolus. Its subcellular location is the nucleoplasm. Functionally, component of the NOP7 complex, which is required for maturation of the 25S and 5.8S ribosomal RNAs and formation of the 60S ribosome. In Eremothecium gossypii (strain ATCC 10895 / CBS 109.51 / FGSC 9923 / NRRL Y-1056) (Yeast), this protein is Ribosome biogenesis protein ERB1.